The primary structure comprises 218 residues: Putative inactive cathepsin L-like protein CTSL3P (218 aa).

2 disordered regions span residues 144–173 and 195–218; these read GDWK…EVAQ and GDED…EAQV. Basic and acidic residues predominate over residues 201 to 212; it reads EDKWPHDMRNHL.

It belongs to the peptidase C1 family.

In Homo sapiens (Human), this protein is Putative inactive cathepsin L-like protein CTSL3P (CTSL3P).